The sequence spans 325 residues: Putative HTH-type transcriptional regulatory protein MK1005 (325 aa).

Residues 128 to 190 (VDELDVSRVR…FERRVAELLE (63 aa)) enclose the HTH cro/C1-type domain. The segment at residues 139-158 (RQLRREGGRITLARAEEADV) is a DNA-binding region (H-T-H motif).

This Methanopyrus kandleri (strain AV19 / DSM 6324 / JCM 9639 / NBRC 100938) protein is Putative HTH-type transcriptional regulatory protein MK1005.